A 480-amino-acid polypeptide reads, in one-letter code: GTPase Obg (480 aa).

One can recognise an Obg domain in the interval 2–159; sequence TRFIDRVVIH…RDLTLELKTV (158 aa). The region spanning 160–341 is the OBG-type G domain; it reads ADVGLVGFPS…LTFALWDMVA (182 aa). GTP is bound by residues 166–173, 191–195, 212–215, 292–295, and 322–324; these read GFPSAGKS, FTTLA, DVPG, NKID, and STV. Mg(2+) is bound by residues serine 173 and threonine 193. The OCT domain occupies 359–437; sequence PIPVDETAFS…IGDMTFDWEP (79 aa). The tract at residues 441–480 is disordered; it reads AGVDVPLTGRGTDVRLEQTDRVGADERKAARKARRQSGDE. Basic and acidic residues predominate over residues 452–468; the sequence is TDVRLEQTDRVGADERK. Residues 469 to 480 show a composition bias toward basic residues; it reads AARKARRQSGDE.

This sequence belongs to the TRAFAC class OBG-HflX-like GTPase superfamily. OBG GTPase family. As to quaternary structure, monomer. The cofactor is Mg(2+).

The protein localises to the cytoplasm. In terms of biological role, an essential GTPase which binds GTP, GDP and possibly (p)ppGpp with moderate affinity, with high nucleotide exchange rates and a fairly low GTP hydrolysis rate. Plays a role in control of the cell cycle, stress response, ribosome biogenesis and in those bacteria that undergo differentiation, in morphogenesis control. The polypeptide is GTPase Obg (Mycolicibacterium vanbaalenii (strain DSM 7251 / JCM 13017 / BCRC 16820 / KCTC 9966 / NRRL B-24157 / PYR-1) (Mycobacterium vanbaalenii)).